Consider the following 182-residue polypeptide: Translation initiation factor IF-3 (182 aa).

Belongs to the IF-3 family. Monomer.

The protein resides in the cytoplasm. Functionally, IF-3 binds to the 30S ribosomal subunit and shifts the equilibrium between 70S ribosomes and their 50S and 30S subunits in favor of the free subunits, thus enhancing the availability of 30S subunits on which protein synthesis initiation begins. The polypeptide is Translation initiation factor IF-3 (Tropheryma whipplei (strain TW08/27) (Whipple's bacillus)).